The following is an 84-amino-acid chain: Large ribosomal subunit protein bL27 (84 aa).

The interval Met1–Gly22 is disordered.

The protein belongs to the bacterial ribosomal protein bL27 family.

This Shewanella woodyi (strain ATCC 51908 / MS32) protein is Large ribosomal subunit protein bL27.